Consider the following 725-residue polypeptide: Consortin (725 aa).

Disordered stretches follow at residues 1–72, 103–124, 296–353, 375–397, and 485–510; these read MDDS…LNNN, GKDK…AKKI, LLVS…SLSV, TQSS…CEDD, and QQPD…ENVL. Residues 1–664 lie on the Cytoplasmic side of the membrane; sequence MDDSDTPTYY…LDQDEVGGGS (664 aa). Over residues 63 to 72 the composition is skewed to polar residues; the sequence is VSEQDSLNNN. Over residues 109–121 the composition is skewed to basic residues; the sequence is PGKRSPRSKKGTA. Positions 300–314 are enriched in basic and acidic residues; it reads EDPKEGGATTKESES. Polar residues-rich tracts occupy residues 343 to 353 and 375 to 388; these read DVQTDSPSLSV and TQSS…SGPD. The chain crosses the membrane as a helical span at residues 665-685; sequence CILLVLLCIATVFLSVGGTAL. Topologically, residues 686 to 725 are extracellular; the sequence is YCTFGDMESPVCTDFADNMDFYYTKLLQGVAELKHWIYLS.

The protein belongs to the CNST family. As to quaternary structure, interacts with connexins GJA1/CX43, GJB1/CX32, GJB2/CX26, GJB3/CX31, GJB6/CX30 and GJC1/CX45. Also interacts with GGA1 and GGA2. Does not interact with PANX1.

It is found in the cell membrane. It localises to the golgi apparatus. The protein resides in the trans-Golgi network membrane. The protein localises to the cytoplasmic vesicle. Its subcellular location is the secretory vesicle. In terms of biological role, required for targeting of connexins to the plasma membrane. The sequence is that of Consortin (CNST) from Homo sapiens (Human).